The primary structure comprises 437 residues: Methionine aminopeptidase 2 (437 aa).

A disordered region spans residues 1–90; the sequence is MAAQAAPAEE…LFPNNQYPKG (90 aa). Positions 10-20 are enriched in basic and acidic residues; the sequence is ELSKLSVDETK. Residues 31–42 are compositionally biased toward acidic residues; sequence SDAESGDEEAEE. Residues 52–66 are compositionally biased toward basic residues; that stretch reads AKKKKKRKPKKKKKA. Position 190 (H190) interacts with substrate. A divalent metal cation contacts are provided by D210, D221, and H290. Residue H298 participates in substrate binding. E323 and E418 together coordinate a divalent metal cation.

The protein belongs to the peptidase M24A family. Methionine aminopeptidase eukaryotic type 2 subfamily. Co(2+) serves as cofactor. The cofactor is Zn(2+). It depends on Mn(2+) as a cofactor. Requires Fe(2+) as cofactor.

Its subcellular location is the cytoplasm. The catalysed reaction is Release of N-terminal amino acids, preferentially methionine, from peptides and arylamides.. Its function is as follows. Cotranslationally removes the N-terminal methionine from nascent proteins. The N-terminal methionine is often cleaved when the second residue in the primary sequence is small and uncharged (Met-Ala-, Cys, Gly, Pro, Ser, Thr, or Val). The sequence is that of Methionine aminopeptidase 2 from Neurospora crassa (strain ATCC 24698 / 74-OR23-1A / CBS 708.71 / DSM 1257 / FGSC 987).